A 415-amino-acid chain; its full sequence is Corticotropin-releasing factor receptor 1 (415 aa).

The signal sequence occupies residues methionine 1–threonine 23. The Extracellular portion of the chain corresponds to serine 24–lysine 111. 3 cysteine pairs are disulfide-bonded: cysteine 30–cysteine 54, cysteine 44–cysteine 87, and cysteine 68–cysteine 102. Asparagine 38, asparagine 45, asparagine 78, asparagine 90, and asparagine 98 each carry an N-linked (GlcNAc...) asparagine glycan. The important for peptide agonist binding stretch occupies residues tyrosine 99–glutamate 108. A helical membrane pass occupies residues serine 112–leucine 142. At arginine 143–cysteine 149 the chain is on the cytoplasmic side. A helical transmembrane segment spans residues leucine 150–leucine 174. Residues threonine 175 to arginine 189 are Extracellular-facing. Cysteine 188 and cysteine 258 are oxidised to a cystine. Residues leucine 190 to valine 218 form a helical membrane-spanning segment. At leucine 219 to arginine 225 the chain is on the cytoplasmic side. The helical transmembrane segment at leucine 226 to tyrosine 253 threads the bilayer. Topologically, residues aspartate 254 to aspartate 269 are extracellular. Residues tyrosine 270 to methionine 295 traverse the membrane as a helical segment. The important for antagonist binding stretch occupies residues leucine 280 to isoleucine 290. The Cytoplasmic segment spans residues threonine 296 to threonine 306. Residue serine 301 is modified to Phosphoserine; by PKA. A helical membrane pass occupies residues isoleucine 307 to phenylalanine 331. Topologically, residues valine 332–glutamate 338 are extracellular. The helical transmembrane segment at valine 339–serine 368 threads the bilayer. The Cytoplasmic segment spans residues glutamate 369 to valine 415.

This sequence belongs to the G-protein coupled receptor 2 family. In terms of assembly, interacts (via N-terminal extracellular domain) with CRH and UCN. Interacts with DLG1; this inhibits endocytosis of CRHR1 after agonist binding. Heterodimer; heterodimerizes with GPER1. In terms of processing, C-terminal Ser or Thr residues may be phosphorylated. Phosphorylation at Ser-301 by PKA prevents maximal coupling to Gq-protein, and thereby negatively regulates downstream signaling. Detected in brain, especially in cerebellum. Detected in pituitary gland, and at lower levels in the olfactory bulb.

Its subcellular location is the cell membrane. The protein localises to the endosome. G-protein coupled receptor for CRH (corticotropin-releasing factor) and UCN (urocortin). Has high affinity for CRH and UCN. Ligand binding causes a conformation change that triggers signaling via guanine nucleotide-binding proteins (G proteins) and down-stream effectors, such as adenylate cyclase. Promotes the activation of adenylate cyclase, leading to increased intracellular cAMP levels. Inhibits the activity of the calcium channel CACNA1H. Required for normal embryonic development of the adrenal gland and for normal hormonal responses to stress. Plays a role in the response to anxiogenic stimuli. This chain is Corticotropin-releasing factor receptor 1 (Crhr1), found in Rattus norvegicus (Rat).